The sequence spans 43 residues: Protein PsbN (43 aa).

Residues 7–27 (FVVGILVALVLITAFAVYTAF) traverse the membrane as a helical segment.

The protein belongs to the PsbN family.

Its subcellular location is the cell inner membrane. Functionally, may play a role in photosystem I and II biogenesis. The chain is Protein PsbN from Gloeobacter violaceus (strain ATCC 29082 / PCC 7421).